A 221-amino-acid polypeptide reads, in one-letter code: Eukaryotic translation initiation factor 3 subunit K (221 aa).

Residues 46-207 (YDLEANLACL…NIKTKHITEK (162 aa)) form the PCI domain.

It belongs to the eIF-3 subunit K family. As to quaternary structure, component of the eukaryotic translation initiation factor 3 (eIF-3) complex.

It is found in the cytoplasm. Component of the eukaryotic translation initiation factor 3 (eIF-3) complex, which is involved in protein synthesis of a specialized repertoire of mRNAs and, together with other initiation factors, stimulates binding of mRNA and methionyl-tRNAi to the 40S ribosome. The eIF-3 complex specifically targets and initiates translation of a subset of mRNAs involved in cell proliferation. This Aedes aegypti (Yellowfever mosquito) protein is Eukaryotic translation initiation factor 3 subunit K.